The chain runs to 332 residues: Ribosomal RNA small subunit methyltransferase H (332 aa).

S-adenosyl-L-methionine-binding positions include 34–36, Asp-59, Phe-86, Asp-112, and Gln-119; that span reads GGH.

The protein belongs to the methyltransferase superfamily. RsmH family.

It localises to the cytoplasm. It catalyses the reaction cytidine(1402) in 16S rRNA + S-adenosyl-L-methionine = N(4)-methylcytidine(1402) in 16S rRNA + S-adenosyl-L-homocysteine + H(+). In terms of biological role, specifically methylates the N4 position of cytidine in position 1402 (C1402) of 16S rRNA. The protein is Ribosomal RNA small subunit methyltransferase H of Chlorobium phaeobacteroides (strain BS1).